A 324-amino-acid polypeptide reads, in one-letter code: Protoheme IX farnesyltransferase (324 aa).

Helical transmembrane passes span 31–51 (LIVL…RGEV), 53–73 (PVLA…ANTI), 104–124 (LVFA…CANL), 125–145 (LSAC…THWL), 153–173 (IVIG…AVTG), 181–201 (VLFA…AMLI), 222–242 (TAWQ…LLVY), 243–263 (PLHA…VVFI), and 285–305 (FSIL…LPLT).

Belongs to the UbiA prenyltransferase family. Protoheme IX farnesyltransferase subfamily.

The protein resides in the cell inner membrane. The catalysed reaction is heme b + (2E,6E)-farnesyl diphosphate + H2O = Fe(II)-heme o + diphosphate. The protein operates within porphyrin-containing compound metabolism; heme O biosynthesis; heme O from protoheme: step 1/1. In terms of biological role, converts heme B (protoheme IX) to heme O by substitution of the vinyl group on carbon 2 of heme B porphyrin ring with a hydroxyethyl farnesyl side group. This is Protoheme IX farnesyltransferase from Cyanothece sp. (strain PCC 7425 / ATCC 29141).